We begin with the raw amino-acid sequence, 508 residues long: ATP synthase subunit alpha, mitochondrial (508 aa).

171–178 provides a ligand contact to ATP; sequence GDRQTGKT.

Belongs to the ATPase alpha/beta chains family. As to quaternary structure, F-type ATPases have 2 components, CF(1) - the catalytic core - and CF(0) - the membrane proton channel. CF(1) has five subunits: alpha(3), beta(3), gamma(1), delta(1), epsilon(1). CF(0) has three main subunits: a, b and c.

It is found in the mitochondrion. Its subcellular location is the mitochondrion inner membrane. In terms of biological role, mitochondrial membrane ATP synthase (F(1)F(0) ATP synthase or Complex V) produces ATP from ADP in the presence of a proton gradient across the membrane which is generated by electron transport complexes of the respiratory chain. F-type ATPases consist of two structural domains, F(1) - containing the extramembraneous catalytic core, and F(0) - containing the membrane proton channel, linked together by a central stalk and a peripheral stalk. During catalysis, ATP synthesis in the catalytic domain of F(1) is coupled via a rotary mechanism of the central stalk subunits to proton translocation. Subunits alpha and beta form the catalytic core in F(1). Rotation of the central stalk against the surrounding alpha(3)beta(3) subunits leads to hydrolysis of ATP in three separate catalytic sites on the beta subunits. Subunit alpha does not bear the catalytic high-affinity ATP-binding sites. The chain is ATP synthase subunit alpha, mitochondrial (ATPA) from Phaseolus vulgaris (Kidney bean).